The chain runs to 40 residues: Thioredoxin (40 aa).

An intrachain disulfide couples Cys-29 to Cys-32.

It belongs to the thioredoxin family.

Functionally, participates in various redox reactions through the reversible oxidation of its active center dithiol to a disulfide and catalyzes dithiol-disulfide exchange reactions. The sequence is that of Thioredoxin (trxA) from Clostridium sporogenes.